The following is a 75-amino-acid chain: DNA-directed RNA polymerase subunit omega (75 aa).

The protein belongs to the RNA polymerase subunit omega family. In cyanobacteria the RNAP catalytic core is composed of 2 alpha, 1 beta, 1 beta', 1 gamma and 1 omega subunit. When a sigma factor is associated with the core the holoenzyme is formed, which can initiate transcription.

The catalysed reaction is RNA(n) + a ribonucleoside 5'-triphosphate = RNA(n+1) + diphosphate. Its function is as follows. Promotes RNA polymerase assembly. Latches the N- and C-terminal regions of the beta' subunit thereby facilitating its interaction with the beta and alpha subunits. The sequence is that of DNA-directed RNA polymerase subunit omega from Microcystis aeruginosa (strain NIES-843 / IAM M-2473).